The primary structure comprises 1955 residues: MKSAASSEDVVRVTEDLSECRNRLDAGIEENRRNRQVIQDINDQLQRFRQRANAESIESFNLTPSPDVTLSSLAHPGLTHLHNQTNISMPSLTIDIPLNSNAMISSSRTPNYAINGLRNRHKSLVGHRYRSTSPIGDYGRHRSSPRVLAHYNLDGADIGVGEENLDELFAKLKEELFKNNTLEEVNEMLREENDAALAANEHLRVDATNLSRQLQQLQQQQHTESMRFRSENTRYRNQTETQHRKLISLWKEFTAVKRQLHELRTTTANDLDRQLTEFTRCATLMRKAIRHAEQKNLDQKEQMKREKDDVLDETLRQLNSVTENYMKSEEKANERQRDLKRKEDECRKLREQNDELSDILEQLSKMAHEMAGGRGRNETPMDVARKMRKLLTTKNGEIDESREAAKQAEKERDRAKKDLEKEEKRRKDDREAERKRSSVYSQREHDLKKLDDELRKASEKIRNLEEQRESQEKLTISVQNSLNEAHRQHKQFIEELMIRHREELKEREDSHEEALRSKDTEERSRFEKERSEREKIRRESDELRETQRSLKGDVAAMKTDLDDKTLRLDMLETERDELKKKLETEREQADQRDLEIAECRAKLDEMAEKEAELRKELAEFQAIITAMEGEGKLNQEQFLESKNELNTLTDQIESLNSEVENKNEEIRNLMATLQEKEVHIQNVRTSSHQLTATYEEANGEIDILKAELTRLHEQVNERTRQISEANEKYDDAARKNDALLEDVATWQEKYEQLKMELEEMNRRGQEKEREEADLRALLDDLRGNFDKLTNELKQKGVTVDSLNEEISSLKEQLNKSEKERKEELLRMEELEQKNEAEMKEEYEVKLQLAEKDRQGVENFGKECEARMNELTKIHEMLMEEHDQLKVDHLHTEEEVERLKEKMRKELEKLNEQNDGDRAEWSNERNRLESSKNEAVTELQERVQKLEDVVKEKEDKEIALRRDLEDSHEKSRDLDDKLRKMELTDEEKEEDRKKEQKTLNEERMKLMEQKEEAMLVATKHATTIDQQTRRISVLEGDVEKLTAGIAERESSINALESNTMELISKLETTEAELEKLKDELAVMLKQNSELKNGKEGLSEKWNEERKKIQDLADQLREANKVVHNMRMKNVNLEEKKNELDQNVTDLTNKVRQLEIQLMDKAAKNEVSGDLLRKMEHDAQSMLKQAQNEQFRLTDLEKVRKALQDENQRLVNDLATVKAAFEVKRETSKSAISDILDKYRSAEEKANKGELDNQRLRSDLATVTLKLERQELKAKDSDNRLRDSQKRFEEVQSKLANLQKSAVESLQNPMSSNSRQNRSIYVDIPRAASSIGLNENSDEVPLRSSPSVRFADSSQNMQRAVDSMDVSSSVGVTLRFLKERIEQLEADNADLSDALEKAKDELRQRNEKLADRQMVIERVERQLVHITEERNTIENRMTSQRQMYLTNEESSRSREHEIRSMKARISTLELHLREKESKLAHLRKEIEVLHGQLHDALESKEKATGLVGVQDSKHRDLEEQLDRANRERELAIGKQRRTLAENENLFRKLEQLEKEREQLMREITDERRLNERNRTSLEELRVSERTWKSAMTTAKKPAEEQERAVQEQRRWEESNHEMTNRNTALTKECDRLRVEMRDQLNRMNGINLRSVDFERKNEELSSKLIVMQNTVTAMKKFEEEWKRLEAEMRAELKILRKEKLMQTAEIEDLKRKSFRSDTEKKEIEGIRVRLEREISALKRHVDALEEEKGKTEKAVRETMNERRAIDKSLASMERENQQLYRNCAQLQAQIQNLERDAGNRSVTKLAKEHSLLEARIAALIEEKRQLQSMLDQKDANYSHKRKLLESQIQLLREQLEAERRKRTKGVVATGPTVSRRGVQHTSAFRHTIERHRSLSQSSERTILQERYLEYVYTGDRTPAIQMINTPPISPLSHSGSFNSDGREARIRRESDNGHLQH.

5 coiled-coil regions span residues 29–58 (EENR…ESIE), 162–223 (EENL…QQHT), 284–1303 (LMRK…AVES), 1368–1579 (VGVT…EELR), and 1607–1863 (RRWE…RTKG). Disordered stretches follow at residues 321–341 (VTEN…DLKR), 391–451 (LTTK…KKLD), 504–551 (LKER…RSLK), 907–935 (EKLN…NEAV), and 961–998 (RDLE…QKTL). Basic and acidic residues-rich tracts occupy residues 326 to 341 (MKSE…DLKR) and 396 to 451 (GEID…KKLD). Basic and acidic residues-rich tracts occupy residues 907–931 (EKLN…ESSK), 961–982 (RDLE…KMEL), and 989–998 (EDRKKEQKTL).

It belongs to the rootletin family. In terms of tissue distribution, expressed in head ciliated neurons.

It localises to the cytoplasm. The protein resides in the cytoskeleton. Its subcellular location is the cilium basal body. The protein localises to the cilium axoneme. Functionally, major structural component of the ciliary rootlet, a cytoskeletal-like structure in ciliated cells which originates from the basal body at the proximal end of a cilium and extends proximally toward the cell nucleus. Required for cilia integrity and function in sensory neurons. Maintains cilia integrity, partly by modulating the assembly and transport of intraflagellar proteins along the ciliary axoneme. Required for normal mating behavior and normal responses to environmental and chemical stimuli. This Caenorhabditis elegans protein is Rootletin.